Here is a 139-residue protein sequence, read N- to C-terminus: Holo-[acyl-carrier-protein] synthase (139 aa).

Mg(2+)-binding residues include aspartate 8 and glutamate 57.

It belongs to the P-Pant transferase superfamily. AcpS family. Mg(2+) is required as a cofactor.

The protein localises to the cytoplasm. It carries out the reaction apo-[ACP] + CoA = holo-[ACP] + adenosine 3',5'-bisphosphate + H(+). Functionally, transfers the 4'-phosphopantetheine moiety from coenzyme A to a Ser of acyl-carrier-protein. In Sinorhizobium medicae (strain WSM419) (Ensifer medicae), this protein is Holo-[acyl-carrier-protein] synthase.